Here is a 224-residue protein sequence, read N- to C-terminus: MTAPKAVVLVSGGLDSATVLAIAREQEFICHTLSFNYGQRHRVELQAAAEISRRMGAVEHKRITIDLGGFGGSALTDPSMAVPEASSGAIPITYVPARNTVFLSFALGWAEVLGAQDIFIGVNAVDYSGYPDCRPAFIKAFEHLAKLATCAGLEGRAFRIQAPLLHLSKAEIIREGMRLGIDYSRTISCYQADENGRACGVCDSCRFRKQGFWDAGVPDPTRYH.

10-20 (VSGGLDSATVL) provides a ligand contact to ATP. The Zn(2+) site is built by cysteine 189, cysteine 199, cysteine 202, and cysteine 205.

This sequence belongs to the QueC family. Requires Zn(2+) as cofactor.

The enzyme catalyses 7-carboxy-7-deazaguanine + NH4(+) + ATP = 7-cyano-7-deazaguanine + ADP + phosphate + H2O + H(+). Its pathway is purine metabolism; 7-cyano-7-deazaguanine biosynthesis. Functionally, catalyzes the ATP-dependent conversion of 7-carboxy-7-deazaguanine (CDG) to 7-cyano-7-deazaguanine (preQ(0)). This is 7-cyano-7-deazaguanine synthase from Nitrosococcus oceani (strain ATCC 19707 / BCRC 17464 / JCM 30415 / NCIMB 11848 / C-107).